The primary structure comprises 387 residues: Succinate--CoA ligase [ADP-forming] subunit beta (387 aa).

Residues K9 to E244 form the ATP-grasp domain. ATP is bound by residues K46, G53–G55, E99, C102, and E107. Mg(2+) is bound by residues N199 and D213. Substrate is bound by residues N264 and G321 to M323.

Belongs to the succinate/malate CoA ligase beta subunit family. As to quaternary structure, heterotetramer of two alpha and two beta subunits. The cofactor is Mg(2+).

The catalysed reaction is succinate + ATP + CoA = succinyl-CoA + ADP + phosphate. The enzyme catalyses GTP + succinate + CoA = succinyl-CoA + GDP + phosphate. Its pathway is carbohydrate metabolism; tricarboxylic acid cycle; succinate from succinyl-CoA (ligase route): step 1/1. Functionally, succinyl-CoA synthetase functions in the citric acid cycle (TCA), coupling the hydrolysis of succinyl-CoA to the synthesis of either ATP or GTP and thus represents the only step of substrate-level phosphorylation in the TCA. The beta subunit provides nucleotide specificity of the enzyme and binds the substrate succinate, while the binding sites for coenzyme A and phosphate are found in the alpha subunit. The protein is Succinate--CoA ligase [ADP-forming] subunit beta of Bdellovibrio bacteriovorus (strain ATCC 15356 / DSM 50701 / NCIMB 9529 / HD100).